A 305-amino-acid chain; its full sequence is Membrane glycoprotein UL142 (305 aa).

An N-terminal signal peptide occupies residues 1–19 (MRIEWACWLFGYFVSSVGS). Over 20–270 (ERSLSYRYHL…QKTNNTTSPW (251 aa)) the chain is Lumenal. Residues 271 to 288 (VYAIPMGATATIGAGLYI) form a helical membrane-spanning segment. The Cytoplasmic segment spans residues 289–305 (GKHFTPVKFVYEVWRGQ).

As to quaternary structure, interacts with host MICA and ULBP3.

The protein localises to the host endoplasmic reticulum membrane. It is found in the host Golgi apparatus membrane. Functionally, participates in the inhibition of the host immune response. Prevents host NK cell-mediated lysis of the infected cell by preventing the KLRK1 ligand 3/ULBP3 trafficking to the cell surface. Also retains another KLRK1 ligand, MHC class I-related chain A/MICA, in the Golgi apparatus to avoid its surface expression. The sequence is that of Membrane glycoprotein UL142 (UL142) from Homo sapiens (Human).